The following is a 921-amino-acid chain: Isoleucine--tRNA ligase (921 aa).

The 'HIGH' region signature appears at 59–69; the sequence is PYANGHLHIGH. Glutamate 569 is a binding site for L-isoleucyl-5'-AMP. The 'KMSKS' region signature appears at 610-614; it reads KMSKS. Residue lysine 613 coordinates ATP. Residues cysteine 894, cysteine 897, cysteine 909, and cysteine 912 each contribute to the Zn(2+) site.

This sequence belongs to the class-I aminoacyl-tRNA synthetase family. IleS type 1 subfamily. In terms of assembly, monomer. Zn(2+) serves as cofactor.

It is found in the cytoplasm. The enzyme catalyses tRNA(Ile) + L-isoleucine + ATP = L-isoleucyl-tRNA(Ile) + AMP + diphosphate. Functionally, catalyzes the attachment of isoleucine to tRNA(Ile). As IleRS can inadvertently accommodate and process structurally similar amino acids such as valine, to avoid such errors it has two additional distinct tRNA(Ile)-dependent editing activities. One activity is designated as 'pretransfer' editing and involves the hydrolysis of activated Val-AMP. The other activity is designated 'posttransfer' editing and involves deacylation of mischarged Val-tRNA(Ile). The sequence is that of Isoleucine--tRNA ligase from Campylobacter lari (strain RM2100 / D67 / ATCC BAA-1060).